The sequence spans 136 residues: Transcription antitermination protein NusB (136 aa).

Belongs to the NusB family.

Functionally, involved in transcription antitermination. Required for transcription of ribosomal RNA (rRNA) genes. Binds specifically to the boxA antiterminator sequence of the ribosomal RNA (rrn) operons. This is Transcription antitermination protein NusB from Paenarthrobacter aurescens (strain TC1).